The following is a 153-amino-acid chain: Transcriptional repressor NrdR (153 aa).

A zinc finger lies at 3 to 34 (CPSCHHSGTRVLESRPVEEGRSIRRRRECEQC). One can recognise an ATP-cone domain in the interval 49–139 (LIVVKKEGTR…VYRQFKDINV (91 aa)).

This sequence belongs to the NrdR family. The cofactor is Zn(2+).

Its function is as follows. Negatively regulates transcription of bacterial ribonucleotide reductase nrd genes and operons by binding to NrdR-boxes. This chain is Transcriptional repressor NrdR, found in Geobacillus kaustophilus (strain HTA426).